Consider the following 211-residue polypeptide: Guanylate kinase (211 aa).

Residues 7–185 form the Guanylate kinase-like domain; the sequence is GLLIVVTGPS…AVAELRAIIM (179 aa). ATP is bound at residue 14 to 21; sequence GPSAVGKG.

It belongs to the guanylate kinase family.

It is found in the cytoplasm. The catalysed reaction is GMP + ATP = GDP + ADP. Functionally, essential for recycling GMP and indirectly, cGMP. The polypeptide is Guanylate kinase (Symbiobacterium thermophilum (strain DSM 24528 / JCM 14929 / IAM 14863 / T)).